A 185-amino-acid chain; its full sequence is Tetratricopeptide repeat protein 36 homolog (185 aa).

3 TPR repeats span residues 53–86, 88–119, and 125–158; these read SREL…AQRA, VLNN…ASDQ, and CHAH…GSKF.

The protein belongs to the TTC36 family.

The chain is Tetratricopeptide repeat protein 36 homolog from Drosophila pseudoobscura pseudoobscura (Fruit fly).